Here is a 382-residue protein sequence, read N- to C-terminus: Queuine tRNA-ribosyltransferase (382 aa).

Asp-96 serves as the catalytic Proton acceptor. Residues 96–100 (DSGGF), Asp-151, Gln-194, and Gly-221 each bind substrate. The interval 252-258 (GVGAPDS) is RNA binding. Asp-271 acts as the Nucleophile in catalysis. The RNA binding; important for wobble base 34 recognition stretch occupies residues 276 to 280 (TRIAR). Zn(2+) contacts are provided by Cys-309, Cys-311, Cys-314, and His-340.

This sequence belongs to the queuine tRNA-ribosyltransferase family. As to quaternary structure, homodimer. Within each dimer, one monomer is responsible for RNA recognition and catalysis, while the other monomer binds to the replacement base PreQ1. It depends on Zn(2+) as a cofactor.

The catalysed reaction is 7-aminomethyl-7-carbaguanine + guanosine(34) in tRNA = 7-aminomethyl-7-carbaguanosine(34) in tRNA + guanine. It functions in the pathway tRNA modification; tRNA-queuosine biosynthesis. Catalyzes the base-exchange of a guanine (G) residue with the queuine precursor 7-aminomethyl-7-deazaguanine (PreQ1) at position 34 (anticodon wobble position) in tRNAs with GU(N) anticodons (tRNA-Asp, -Asn, -His and -Tyr). Catalysis occurs through a double-displacement mechanism. The nucleophile active site attacks the C1' of nucleotide 34 to detach the guanine base from the RNA, forming a covalent enzyme-RNA intermediate. The proton acceptor active site deprotonates the incoming PreQ1, allowing a nucleophilic attack on the C1' of the ribose to form the product. After dissociation, two additional enzymatic reactions on the tRNA convert PreQ1 to queuine (Q), resulting in the hypermodified nucleoside queuosine (7-(((4,5-cis-dihydroxy-2-cyclopenten-1-yl)amino)methyl)-7-deazaguanosine). This chain is Queuine tRNA-ribosyltransferase, found in Lactococcus lactis subsp. lactis (strain IL1403) (Streptococcus lactis).